A 194-amino-acid polypeptide reads, in one-letter code: ATP-dependent Clp protease proteolytic subunit 1 (194 aa).

Residue serine 98 is the Nucleophile of the active site. Histidine 123 is an active-site residue.

The protein belongs to the peptidase S14 family. Fourteen ClpP subunits assemble into 2 heptameric rings which stack back to back to give a disk-like structure with a central cavity, resembling the structure of eukaryotic proteasomes.

It is found in the cytoplasm. It carries out the reaction Hydrolysis of proteins to small peptides in the presence of ATP and magnesium. alpha-casein is the usual test substrate. In the absence of ATP, only oligopeptides shorter than five residues are hydrolyzed (such as succinyl-Leu-Tyr-|-NHMec, and Leu-Tyr-Leu-|-Tyr-Trp, in which cleavage of the -Tyr-|-Leu- and -Tyr-|-Trp bonds also occurs).. Its function is as follows. Cleaves peptides in various proteins in a process that requires ATP hydrolysis. Has a chymotrypsin-like activity. Plays a major role in the degradation of misfolded proteins. ClpXP1 is involved in the complete degradation of the Site-2 clipped anti-sigma-W factor RsiW. This results in the release of SigW and the transcription activation of the genes under the control of the sigma-W factor. This is ATP-dependent Clp protease proteolytic subunit 1 from Halalkalibacterium halodurans (strain ATCC BAA-125 / DSM 18197 / FERM 7344 / JCM 9153 / C-125) (Bacillus halodurans).